A 374-amino-acid chain; its full sequence is PqqA peptide cyclase (374 aa).

The Radical SAM core domain occupies 13-230 (VPAPIAMLAE…EAEARLRGTL (218 aa)). Residues C27, C31, and C34 each coordinate [4Fe-4S] cluster.

It belongs to the radical SAM superfamily. PqqE family. As to quaternary structure, interacts with PqqD. The interaction is necessary for activity of PqqE. [4Fe-4S] cluster serves as cofactor.

The catalysed reaction is [PQQ precursor protein] + S-adenosyl-L-methionine = E-Y cross-linked-[PQQ precursor protein] + 5'-deoxyadenosine + L-methionine + H(+). The protein operates within cofactor biosynthesis; pyrroloquinoline quinone biosynthesis. Its function is as follows. Catalyzes the cross-linking of a glutamate residue and a tyrosine residue in the PqqA protein as part of the biosynthesis of pyrroloquinoline quinone (PQQ). This Ruegeria pomeroyi (strain ATCC 700808 / DSM 15171 / DSS-3) (Silicibacter pomeroyi) protein is PqqA peptide cyclase.